A 608-amino-acid polypeptide reads, in one-letter code: Eukaryotic translation initiation factor 2A (608 aa).

The tract at residues 1-42 is disordered; it reads MSAPNNNNNNTTTTTTTSPSPSQSSPTLTSVASNSTTTTTTE. 4 WD repeats span residues 115 to 161, 207 to 255, 310 to 350, and 351 to 393; these read INRP…ILYK, IKLQ…EYCS, NIKG…PLVD, and FGLN…RICG. Low complexity-rich tracts occupy residues 466-478 and 520-544; these read SIQQQKESSPQPQ and STFKPKQKPSSTTTTNNTTTTTTKP. 2 disordered regions span residues 466-499 and 520-554; these read SIQQQKESSPQPQKYTPPSLRNMQAAPPVVTSPP and STFKPKQKPSSTTTTNNTTTTTTKPAADEPKRELT. A compositionally biased stretch (basic and acidic residues) spans 545-554; it reads AADEPKRELT. Positions 550-608 form a coiled coil; that stretch reads KRELTPIEKKIRNVERKLKEVEVLKEKLNSGEFIPPTAIEKINNEQKFLEELRKLQSEL.

Belongs to the WD repeat EIF2A family.

In terms of biological role, functions in the early steps of protein synthesis of a small number of specific mRNAs. Acts by directing the binding of methionyl-tRNAi to 40S ribosomal subunits. In contrast to the eIF-2 complex, it binds methionyl-tRNAi to 40S subunits in a codon-dependent manner, whereas the eIF-2 complex binds methionyl-tRNAi to 40S subunits in a GTP-dependent manner. This Dictyostelium discoideum (Social amoeba) protein is Eukaryotic translation initiation factor 2A (eif2a).